The following is a 501-amino-acid chain: 2,3-bisphosphoglycerate-independent phosphoglycerate mutase (501 aa).

2 residues coordinate Mn(2+): D12 and S62. Catalysis depends on S62, which acts as the Phosphoserine intermediate. Substrate-binding positions include H121, 150-151 (RD), R182, R188, 253-256 (RSDR), and K323. Mn(2+) contacts are provided by D390, H394, D431, H432, and H450.

Belongs to the BPG-independent phosphoglycerate mutase family. In terms of assembly, monomer. It depends on Mn(2+) as a cofactor.

The catalysed reaction is (2R)-2-phosphoglycerate = (2R)-3-phosphoglycerate. It functions in the pathway carbohydrate degradation; glycolysis; pyruvate from D-glyceraldehyde 3-phosphate: step 3/5. Functionally, catalyzes the interconversion of 2-phosphoglycerate and 3-phosphoglycerate. The protein is 2,3-bisphosphoglycerate-independent phosphoglycerate mutase of Ehrlichia canis (strain Jake).